A 194-amino-acid polypeptide reads, in one-letter code: Oligoribonuclease (194 aa).

Positions 11-174 constitute an Exonuclease domain; it reads LIWIDLEMTG…SDVRDSIDEL (164 aa). Tyr-132 is a catalytic residue.

This sequence belongs to the oligoribonuclease family.

The protein localises to the cytoplasm. Functionally, 3'-to-5' exoribonuclease specific for small oligoribonucleotides. In Xanthomonas axonopodis pv. citri (strain 306), this protein is Oligoribonuclease.